Reading from the N-terminus, the 1225-residue chain is DNA-directed RNA polymerase subunit beta' (1225 aa).

4 residues coordinate Zn(2+): Cys-60, Cys-62, Cys-75, and Cys-78. Positions 450, 452, and 454 each coordinate Mg(2+). Positions 818, 892, 899, and 902 each coordinate Zn(2+).

The protein belongs to the RNA polymerase beta' chain family. As to quaternary structure, the RNAP catalytic core consists of 2 alpha, 1 beta, 1 beta' and 1 omega subunit. When a sigma factor is associated with the core the holoenzyme is formed, which can initiate transcription. Mg(2+) serves as cofactor. Requires Zn(2+) as cofactor.

The catalysed reaction is RNA(n) + a ribonucleoside 5'-triphosphate = RNA(n+1) + diphosphate. DNA-dependent RNA polymerase catalyzes the transcription of DNA into RNA using the four ribonucleoside triphosphates as substrates. The chain is DNA-directed RNA polymerase subunit beta' from Streptococcus pneumoniae (strain ATCC 700669 / Spain 23F-1).